Reading from the N-terminus, the 701-residue chain is MSPAPQNRQPSGVPVGGQFAATNHAEPGIGLATFGSEEEYQAAVTTALSAAKAYETTDVEEMNDAEFDRLLAKIASHEAANGIEPEHDLHDTIGHGGAGGGDVEHATPMKSLEKPGEDAVIEFAAKHPKAVIEPKIDGLAISVRYENGKMVRAARRGDGYTGEDVTDRVRGVDGLPEMAGDGDYEVRGELYLNDENKAKANAIRQAAGKAPFANARNGVAGMLNKQDGSYAGLFSFAAYSTTIDEKADHLDSMQQLEGMGFTTARSLLPQSVLDAEDPMAAIAALGAERKGLNFLMDGAVLKVNTAAERAELGEGSRAPKWAVAYKYPAVEEPTVIEDIEYNIGKTGRLSIRARLTPVEVDGSVVEYASLHNVGHLQAADMRIGDTVSAYKANDIIPQVHLPRADLRDESSQPWQPPSVCPQCSEPFDKSTELWRCHTPECSVSGRISYAASRDAGLDIEGLGGSIGDALIEKDLVKDVSDLFYLGEDQLAEVELGETSTGGTRTLGQKNAAKIMAEIEKAKSQPLNRVITALSMRFTGRTFGRRLAAEFGTMEALQAATVSQLANVEGIGQKKAEVIHEQLKKNAPVIAKLREAGVNMGAPKAAPAAGAKAPKLTKPDGKPMNVVVTGSVKGSPLGSLSRSGVQELIEAKGGKASGSVSKTTDLLVCGEPGSSKFLKAQELGIRIVTPDEFAQMVEDGEV.

Positions Met-1–Pro-10 are enriched in polar residues. The tract at residues Met-1–Ala-21 is disordered. NAD(+) contacts are provided by residues Asp-64–Asp-68, Ser-111–Leu-112, and Glu-133. Residue Lys-135 is the N6-AMP-lysine intermediate of the active site. Residues Arg-156, Glu-189, Lys-302, and Lys-326 each contribute to the NAD(+) site. Positions 420, 423, 436, and 441 each coordinate Zn(2+). The segment covering Lys-603–Pro-613 has biased composition (low complexity). A disordered region spans residues Lys-603–Met-623. One can recognise a BRCT domain in the interval Leu-615–Val-701.

The protein belongs to the NAD-dependent DNA ligase family. LigA subfamily. It depends on Mg(2+) as a cofactor. Mn(2+) is required as a cofactor.

The enzyme catalyses NAD(+) + (deoxyribonucleotide)n-3'-hydroxyl + 5'-phospho-(deoxyribonucleotide)m = (deoxyribonucleotide)n+m + AMP + beta-nicotinamide D-nucleotide.. In terms of biological role, DNA ligase that catalyzes the formation of phosphodiester linkages between 5'-phosphoryl and 3'-hydroxyl groups in double-stranded DNA using NAD as a coenzyme and as the energy source for the reaction. It is essential for DNA replication and repair of damaged DNA. In Pseudarthrobacter chlorophenolicus (strain ATCC 700700 / DSM 12829 / CIP 107037 / JCM 12360 / KCTC 9906 / NCIMB 13794 / A6) (Arthrobacter chlorophenolicus), this protein is DNA ligase 2.